Here is a 104-residue protein sequence, read N- to C-terminus: Protamine-2 (104 aa).

Residues S8 and S10 each carry the phosphoserine modification. The segment at W23–Y104 is disordered. The span at Q24–G35 shows a compositional bias: low complexity. Phosphoserine is present on S37. Residues Y54–Y104 are compositionally biased toward basic residues.

This sequence belongs to the protamine P2 family. In terms of assembly, interacts with TDRP. Post-translationally, proteolytic processing into mature chains is required for histone eviction during spermatogenesis. Transition proteins (TNP1 and TNP2) are required for processing. In terms of tissue distribution, testis.

It localises to the nucleus. The protein resides in the chromosome. Functionally, protamines substitute for histones in the chromatin of sperm during the haploid phase of spermatogenesis. They compact sperm DNA into a highly condensed, stable and inactive complex. In Callithrix jacchus (White-tufted-ear marmoset), this protein is Protamine-2 (PRM2).